The sequence spans 631 residues: Phosphomethylpyrimidine synthase (631 aa).

Substrate contacts are provided by residues asparagine 239, methionine 268, tyrosine 297, histidine 333, serine 353–glycine 355, aspartate 394–arginine 397, and glutamate 433. Histidine 437 lines the Zn(2+) pocket. Tyrosine 460 is a binding site for substrate. Histidine 501 is a Zn(2+) binding site. 3 residues coordinate [4Fe-4S] cluster: cysteine 581, cysteine 584, and cysteine 589.

The protein belongs to the ThiC family. In terms of assembly, homodimer. [4Fe-4S] cluster serves as cofactor.

It carries out the reaction 5-amino-1-(5-phospho-beta-D-ribosyl)imidazole + S-adenosyl-L-methionine = 4-amino-2-methyl-5-(phosphooxymethyl)pyrimidine + CO + 5'-deoxyadenosine + formate + L-methionine + 3 H(+). It participates in cofactor biosynthesis; thiamine diphosphate biosynthesis. Its function is as follows. Catalyzes the synthesis of the hydroxymethylpyrimidine phosphate (HMP-P) moiety of thiamine from aminoimidazole ribotide (AIR) in a radical S-adenosyl-L-methionine (SAM)-dependent reaction. The polypeptide is Phosphomethylpyrimidine synthase (Escherichia coli O6:H1 (strain CFT073 / ATCC 700928 / UPEC)).